Reading from the N-terminus, the 169-residue chain is Large ribosomal subunit protein uL10 (169 aa).

It belongs to the universal ribosomal protein uL10 family. In terms of assembly, part of the ribosomal stalk of the 50S ribosomal subunit. The N-terminus interacts with L11 and the large rRNA to form the base of the stalk. The C-terminus forms an elongated spine to which L12 dimers bind in a sequential fashion forming a multimeric L10(L12)X complex.

In terms of biological role, forms part of the ribosomal stalk, playing a central role in the interaction of the ribosome with GTP-bound translation factors. The polypeptide is Large ribosomal subunit protein uL10 (Lactobacillus delbrueckii subsp. bulgaricus (strain ATCC 11842 / DSM 20081 / BCRC 10696 / JCM 1002 / NBRC 13953 / NCIMB 11778 / NCTC 12712 / WDCM 00102 / Lb 14)).